The following is a 124-amino-acid chain: Holo-[acyl-carrier-protein] synthase (124 aa).

Mg(2+) contacts are provided by D7 and E55.

It belongs to the P-Pant transferase superfamily. AcpS family. Mg(2+) is required as a cofactor.

It localises to the cytoplasm. It carries out the reaction apo-[ACP] + CoA = holo-[ACP] + adenosine 3',5'-bisphosphate + H(+). Its function is as follows. Transfers the 4'-phosphopantetheine moiety from coenzyme A to a Ser of acyl-carrier-protein. In Borrelia garinii subsp. bavariensis (strain ATCC BAA-2496 / DSM 23469 / PBi) (Borreliella bavariensis), this protein is Holo-[acyl-carrier-protein] synthase.